The following is a 196-amino-acid chain: Beta-crystallin A4 (196 aa).

Thr-2 carries the post-translational modification N-acetylthreonine. The segment at 2–11 (TLQCTKSAGH) is N-terminal arm. 2 consecutive Beta/gamma crystallin 'Greek key' domains span residues 12–51 (WRMV…KVLS) and 52–98 (GAWV…RPVA). The connecting peptide stretch occupies residues 99–104 (CANHRD). Beta/gamma crystallin 'Greek key' domains lie at 105–146 (SRLT…HVQS) and 147–195 (GAWV…RRIQ).

Belongs to the beta/gamma-crystallin family. In terms of assembly, homo/heterodimer, or complexes of higher-order. The structure of beta-crystallin oligomers seems to be stabilized through interactions between the N-terminal arms.

Its function is as follows. Crystallins are the dominant structural components of the vertebrate eye lens. The polypeptide is Beta-crystallin A4 (Cryba4) (Mus musculus (Mouse)).